The primary structure comprises 151 residues: Putative pre-16S rRNA nuclease (151 aa).

It belongs to the YqgF nuclease family.

It is found in the cytoplasm. In terms of biological role, could be a nuclease involved in processing of the 5'-end of pre-16S rRNA. In Prochlorococcus marinus subsp. pastoris (strain CCMP1986 / NIES-2087 / MED4), this protein is Putative pre-16S rRNA nuclease.